A 304-amino-acid chain; its full sequence is Ornithine carbamoyltransferase (304 aa).

Residues 53-56 (STRT), Gln-80, Arg-104, and 131-134 (HPCQ) each bind carbamoyl phosphate. L-ornithine contacts are provided by residues Asn-162, Asp-219, and 223–224 (SM). Carbamoyl phosphate contacts are provided by residues 259 to 260 (CL) and Arg-287.

Belongs to the aspartate/ornithine carbamoyltransferase superfamily. OTCase family.

The protein resides in the cytoplasm. The enzyme catalyses carbamoyl phosphate + L-ornithine = L-citrulline + phosphate + H(+). It participates in amino-acid biosynthesis; L-arginine biosynthesis; L-arginine from L-ornithine and carbamoyl phosphate: step 1/3. Its function is as follows. Reversibly catalyzes the transfer of the carbamoyl group from carbamoyl phosphate (CP) to the N(epsilon) atom of ornithine (ORN) to produce L-citrulline. The chain is Ornithine carbamoyltransferase from Herminiimonas arsenicoxydans.